Here is a 143-residue protein sequence, read N- to C-terminus: Transcriptional regulator MraZ (143 aa).

SpoVT-AbrB domains lie at 5–47 (EYLH…PLDE) and 76–119 (ATEC…SQAL).

It belongs to the MraZ family. As to quaternary structure, forms oligomers.

Its subcellular location is the cytoplasm. The protein localises to the nucleoid. In Desulfitobacterium hafniense (strain Y51), this protein is Transcriptional regulator MraZ.